We begin with the raw amino-acid sequence, 263 residues long: Aminoglycoside (3'') (9) adenylyltransferase (263 aa).

The enzyme catalyses streptomycin + ATP = 3''-O-adenylylstreptomycin + diphosphate. The catalysed reaction is spectinomycin + ATP = 9-O-adenylylspectinomycin + diphosphate. In terms of biological role, mediates bacterial resistance to the antibiotics streptomycin and spectinomycin. The protein is Aminoglycoside (3'') (9) adenylyltransferase of Escherichia coli.